Reading from the N-terminus, the 348-residue chain is tRNA pseudouridine synthase D (348 aa).

Residue F27 participates in substrate binding. D80 (nucleophile) is an active-site residue. Position 129 (N129) interacts with substrate. Residues 155 to 303 (GVPNYFGSQR…VESARRAVLL (149 aa)) form the TRUD domain. F329 is a substrate binding site.

Belongs to the pseudouridine synthase TruD family.

The catalysed reaction is uridine(13) in tRNA = pseudouridine(13) in tRNA. Functionally, responsible for synthesis of pseudouridine from uracil-13 in transfer RNAs. This chain is tRNA pseudouridine synthase D, found in Pectobacterium carotovorum subsp. carotovorum (strain PC1).